The sequence spans 283 residues: uncharacterized protein (283 aa).

Residue Asp-121 is part of the active site.

This sequence belongs to the pseudouridine synthase RluA family.

The enzyme catalyses a uridine in RNA = a pseudouridine in RNA. This is an uncharacterized protein from Bacillus subtilis (strain 168).